We begin with the raw amino-acid sequence, 305 residues long: Uracil-DNA glycosylase (305 aa).

D148 acts as the Proton acceptor in catalysis.

This sequence belongs to the uracil-DNA glycosylase (UDG) superfamily. UNG family.

The protein localises to the host nucleus. It carries out the reaction Hydrolyzes single-stranded DNA or mismatched double-stranded DNA and polynucleotides, releasing free uracil.. In terms of biological role, excises uracil residues from the DNA which can arise as a result of misincorporation of dUMP residues by DNA polymerase or deamination of cytosines. Therefore may reduce deleterious uracil incorporation into the viral genome, particularly in terminally differentiated cells which lack DNA repair enzymes. The sequence is that of Uracil-DNA glycosylase from Varicella-zoster virus (strain Dumas) (HHV-3).